A 1003-amino-acid polypeptide reads, in one-letter code: UPF0182 protein Mkms_1433 (1003 aa).

7 helical membrane-spanning segments follow: residues 18-38 (VLIG…RFID), 63-83 (VVVF…GLAL), 114-134 (LFGF…AQSY), 176-196 (FVAT…FGGI), 211-231 (IQLV…YWLD), 260-280 (KLIL…AIVL), and 288-308 (IGVV…PLVV). A compositionally biased stretch (low complexity) spans 902-937 (ATGPAPANLPDGQPAAQPPNGQQPAAQTPGNQAGRA). The tract at residues 902-979 (ATGPAPANLP…MSGLQDAQRS (78 aa)) is disordered.

This sequence belongs to the UPF0182 family.

Its subcellular location is the cell membrane. The protein is UPF0182 protein Mkms_1433 of Mycobacterium sp. (strain KMS).